Consider the following 290-residue polypeptide: 33 kDa chaperonin (290 aa).

2 disulfides stabilise this stretch: C235–C237 and C268–C271.

The protein belongs to the HSP33 family. In terms of processing, under oxidizing conditions two disulfide bonds are formed involving the reactive cysteines. Under reducing conditions zinc is bound to the reactive cysteines and the protein is inactive.

The protein resides in the cytoplasm. Its function is as follows. Redox regulated molecular chaperone. Protects both thermally unfolding and oxidatively damaged proteins from irreversible aggregation. Plays an important role in the bacterial defense system toward oxidative stress. This is 33 kDa chaperonin from Streptococcus pyogenes serotype M3 (strain ATCC BAA-595 / MGAS315).